A 298-amino-acid chain; its full sequence is Probable porphobilinogen deaminase (298 aa).

Residue C241 is modified to S-(dipyrrolylmethanemethyl)cysteine.

Belongs to the HMBS family. Dipyrromethane is required as a cofactor.

It carries out the reaction 4 porphobilinogen + H2O = hydroxymethylbilane + 4 NH4(+). It functions in the pathway porphyrin-containing compound metabolism; protoporphyrin-IX biosynthesis; coproporphyrinogen-III from 5-aminolevulinate: step 2/4. Its function is as follows. Tetrapolymerization of the monopyrrole PBG into the hydroxymethylbilane pre-uroporphyrinogen in several discrete steps. The sequence is that of Probable porphobilinogen deaminase from Methanopyrus kandleri (strain AV19 / DSM 6324 / JCM 9639 / NBRC 100938).